The sequence spans 240 residues: Axial regulator YABBY 3 (240 aa).

Residues 30–57 (CSFCDTVLAVSVPPSSLFKTVTVRCGHC) form a C4-type zinc finger. Positions 135–156 (DHLQEMPRPPPANRPPEKRQRV) are disordered.

The protein belongs to the YABBY family. In terms of assembly, interacts with SPL/NZZ. Interacts with SPEAR2. Binds to LUG and LUH; these complexes promote adaxial cell identity in leaves as well as embryonic shoot apical meristem (SAM) initiation and postembryonic SAM maintenance. As to expression, expressed in abaxial regions of lateral aerial organ primordia leading to cotyledons, leaves, flower meristems, sepals, petals, stamen and carpels, but not in roots.

Its subcellular location is the nucleus. Involved in the abaxial cell fate determination during embryogenesis and organogenesis. Regulates the initiation of embryonic shoot apical meristem (SAM) development. Contributes to the repression of KNOX genes (STM, KNAT1/BP and KNAT2) to avoid ectopic meristems. Binds DNA without sequence specificity. The chain is Axial regulator YABBY 3 (YAB3) from Arabidopsis thaliana (Mouse-ear cress).